The following is a 111-amino-acid chain: Cytochrome c6-like (111 aa).

Residues 1 to 25 (MQKFLKLVLVTFLFLISTLTPPANA) form the signal peptide. 4 residues coordinate heme c: cysteine 39, cysteine 42, histidine 43, and methionine 83.

This sequence belongs to the cytochrome c family. PetJ subfamily. In terms of processing, binds 1 heme c group covalently per subunit.

The protein resides in the cellular thylakoid lumen. The polypeptide is Cytochrome c6-like (Nostoc sp. (strain PCC 7120 / SAG 25.82 / UTEX 2576)).